Reading from the N-terminus, the 251-residue chain is ATP synthase subunit a (251 aa).

Transmembrane regions (helical) follow at residues 28 to 48 (TDTV…AFFL), 84 to 104 (IAPF…ISNW), 130 to 150 (INYV…AGIW), 192 to 212 (IFAG…IMWA), and 220 to 240 (FDLF…ILYF).

Belongs to the ATPase A chain family. F-type ATPases have 2 components, CF(1) - the catalytic core - and CF(0) - the membrane proton channel. CF(1) has five subunits: alpha(3), beta(3), gamma(1), delta(1), epsilon(1). CF(0) has three main subunits: a(1), b(2) and c(9-12). The alpha and beta chains form an alternating ring which encloses part of the gamma chain. CF(1) is attached to CF(0) by a central stalk formed by the gamma and epsilon chains, while a peripheral stalk is formed by the delta and b chains.

The protein localises to the cell membrane. Key component of the proton channel; it plays a direct role in the translocation of protons across the membrane. This chain is ATP synthase subunit a, found in Mycobacterium leprae (strain TN).